A 258-amino-acid polypeptide reads, in one-letter code: Deoxyribose-phosphate aldolase (258 aa).

Aspartate 102 functions as the Proton donor/acceptor in the catalytic mechanism. The Schiff-base intermediate with acetaldehyde role is filled by lysine 165. Residue lysine 199 is the Proton donor/acceptor of the active site.

This sequence belongs to the DeoC/FbaB aldolase family. DeoC type 2 subfamily.

Its subcellular location is the cytoplasm. It catalyses the reaction 2-deoxy-D-ribose 5-phosphate = D-glyceraldehyde 3-phosphate + acetaldehyde. Its pathway is carbohydrate degradation; 2-deoxy-D-ribose 1-phosphate degradation; D-glyceraldehyde 3-phosphate and acetaldehyde from 2-deoxy-alpha-D-ribose 1-phosphate: step 2/2. Catalyzes a reversible aldol reaction between acetaldehyde and D-glyceraldehyde 3-phosphate to generate 2-deoxy-D-ribose 5-phosphate. The chain is Deoxyribose-phosphate aldolase from Vibrio parahaemolyticus serotype O3:K6 (strain RIMD 2210633).